The sequence spans 733 residues: Centrosomal protein of 68 kDa (733 aa).

Residues 71–80 (SKEPVADRSK) show a composition bias toward basic and acidic residues. Disordered stretches follow at residues 71 to 92 (SKEPVADRSKPPLRGPLPSASV), 150 to 207 (GLSQ…SFAN), and 222 to 244 (VVGAGPPLQGSAQPLTSGSDATG). A compositionally biased stretch (low complexity) spans 178–190 (SSRSISASSVGSS). A compositionally biased stretch (polar residues) spans 231–241 (GSAQPLTSGSD). Serine 315 bears the Phosphoserine mark. The disordered stretch occupies residues 420-442 (PQLKTKEKEPPFPRQKRGRQHVS). A phosphoserine mark is found at serine 453 and serine 459. The interval 497–571 (HSSLQVSDSD…KPLKTQPASK (75 aa)) is disordered. The segment covering 540 to 569 (IQPQDSRGKSSLMSNQTLGVSSKPLKTQPA) has biased composition (polar residues).

Interacts with CNTLN; the interaction recruits CEP68 to the centrosome. Interacts with the SCF(FBXW11) complex which contains SKP1, CUL1 and FBXW11; the interaction is probably mediated by FBXW11 and the complex also contains CDK5RAP2 and PCNT. Also interacts with F-box protein BTRC. Interacts with serine/threonine-protein kinase PLK1; the interaction leads to phosphorylation of CEP68 and its subsequent degradation. Interacts with NEK2; the interaction leads to phosphorylation of CEP68. Phosphorylation by PLK1 is required for binding to BTRC in prometaphase. Phosphorylated directly or indirectly by NEK2. NEK2-mediated phosphorylation promotes CEP68 dissociation from the centrosome and its degradation at the onset of mitosis. Post-translationally, ubiquitinated and targeted for proteasomal degradation in early mitosis by the SCF(BTRC) and/or SCF(FBXW11) E3 ubiquitin-protein ligase complexes. Degradation is complete by prometaphase and is required for removal of CDK5RAP2 from the peripheral pericentriolar material and subsequent centriole separation.

The protein resides in the cytoplasm. Its subcellular location is the cytoskeleton. It localises to the microtubule organizing center. The protein localises to the centrosome. Its function is as follows. Involved in maintenance of centrosome cohesion, probably as part of a linker structure which prevents centrosome splitting. Required for localization of CDK5RAP2 to the centrosome during interphase. Contributes to CROCC/rootletin filament formation. The chain is Centrosomal protein of 68 kDa (Cep68) from Mus musculus (Mouse).